Here is a 1201-residue protein sequence, read N- to C-terminus: Coatomer subunit alpha (1201 aa).

WD repeat units lie at residues serine 9–aspartate 39, aspartate 51–serine 81, glycine 93–asparagine 123, glycine 135–aspartate 165, glycine 207–arginine 237, and glycine 251–aspartate 281. Residues alanine 842–aspartate 862 are disordered. The segment covering glutamate 848–aspartate 862 has biased composition (acidic residues).

Oligomeric complex that consists of at least the alpha, beta, beta', gamma, delta, epsilon and zeta subunits. Interacts with the ESCRT-0 subunit VPS27. Interacts with KEI1 (via C-terminal region).

It is found in the cytoplasm. Its subcellular location is the golgi apparatus membrane. It localises to the cytoplasmic vesicle. The protein localises to the COPI-coated vesicle membrane. Its function is as follows. The coatomer is a cytosolic protein complex that binds to dilysine motifs and reversibly associates with Golgi non-clathrin-coated vesicles, which further mediate biosynthetic protein transport from the ER, via the Golgi up to the trans Golgi network. Coatomer complex is required for budding from Golgi membranes, and is essential for the retrograde Golgi-to-ER transport of dilysine-tagged proteins. The sequence is that of Coatomer subunit alpha (COP1) from Saccharomyces cerevisiae (strain ATCC 204508 / S288c) (Baker's yeast).